Consider the following 299-residue polypeptide: MTEHKSGFVSIIGRPNVGKSTFVNRVIGHKIAIMSDKAQTTRNKIQGVMTRDDAQIIFIDTPGIHKPKHKLGDYMMKVAKNTLSEIDAIMFMVNANEEIGRGDEYIIEMLKNVKTPVFLVLNKIDLVHPDELMPKIEEYQSYMDFTEIVPISALEGLNVDHFIDVLKTYLPEGPKYYPDDQISDHPEQFVVGEIIREKILHLTSEEIPHAIGVNVDRMVKESEDRVHIEATIYVERGSQKGIVIGKGGKKLKEVGKRARRDIEMLLGSKVYLELWVKVQRDWRNKVNFIRQIGYVEDQD.

The Era-type G domain maps to 5–172 (KSGFVSIIGR…IDVLKTYLPE (168 aa)). Residues 13–20 (GRPNVGKS) are G1. 13–20 (GRPNVGKS) contacts GTP. The interval 39–43 (QTTRN) is G2. Residues 60–63 (DTPG) form a G3 region. GTP contacts are provided by residues 60–64 (DTPGI) and 122–125 (NKID). The tract at residues 122–125 (NKID) is G4. Residues 151 to 153 (ISA) form a G5 region. Positions 203–280 (TSEEIPHAIG…YLELWVKVQR (78 aa)) constitute a KH type-2 domain.

It belongs to the TRAFAC class TrmE-Era-EngA-EngB-Septin-like GTPase superfamily. Era GTPase family. As to quaternary structure, monomer.

The protein resides in the cytoplasm. It localises to the cell membrane. Its function is as follows. An essential GTPase that binds both GDP and GTP, with rapid nucleotide exchange. Plays a role in 16S rRNA processing and 30S ribosomal subunit biogenesis and possibly also in cell cycle regulation and energy metabolism. This is GTPase Era from Staphylococcus aureus (strain NCTC 8325 / PS 47).